The following is a 152-amino-acid chain: Interleukin-3 (152 aa).

Positions 1 to 19 (MSRLPVLLLLQLLVRPGLQ) are cleaved as a signal peptide. N-linked (GlcNAc...) asparagine glycans are attached at residues Asn-34 and Asn-89. Cysteines 35 and 103 form a disulfide.

It belongs to the IL-3 family. In terms of assembly, monomer. In terms of tissue distribution, activated T-cells, mast cells, natural killer cells.

It localises to the secreted. Functionally, granulocyte/macrophage colony-stimulating factors are cytokines that act in hematopoiesis by controlling the production, differentiation, and function of 2 related white cell populations of the blood, the granulocytes and the monocytes-macrophages. This CSF induces granulocytes, macrophages, mast cells, stem cells, erythroid cells, eosinophils and megakaryocytes. This chain is Interleukin-3 (IL3), found in Pan troglodytes (Chimpanzee).